Consider the following 335-residue polypeptide: Anthranilate phosphoribosyltransferase (335 aa).

5-phospho-alpha-D-ribose 1-diphosphate-binding positions include Gly-79, 82-83, Thr-87, 89-92, 107-115, and Ser-119; these read GD, NIST, and KHGSRSVSS. Residue Gly-79 coordinates anthranilate. Ser-91 serves as a coordination point for Mg(2+). Position 165 (Arg-165) interacts with anthranilate. 2 residues coordinate Mg(2+): Asp-223 and Glu-224.

It belongs to the anthranilate phosphoribosyltransferase family. As to quaternary structure, homodimer. Mg(2+) is required as a cofactor.

The catalysed reaction is N-(5-phospho-beta-D-ribosyl)anthranilate + diphosphate = 5-phospho-alpha-D-ribose 1-diphosphate + anthranilate. The protein operates within amino-acid biosynthesis; L-tryptophan biosynthesis; L-tryptophan from chorismate: step 2/5. Catalyzes the transfer of the phosphoribosyl group of 5-phosphorylribose-1-pyrophosphate (PRPP) to anthranilate to yield N-(5'-phosphoribosyl)-anthranilate (PRA). The sequence is that of Anthranilate phosphoribosyltransferase from Helicobacter pylori (strain Shi470).